We begin with the raw amino-acid sequence, 308 residues long: Acetylglutamate kinase (308 aa).

Substrate-binding positions include 86–87 (GG), Arg-108, and Asn-201.

This sequence belongs to the acetylglutamate kinase family. ArgB subfamily.

The protein localises to the cytoplasm. The catalysed reaction is N-acetyl-L-glutamate + ATP = N-acetyl-L-glutamyl 5-phosphate + ADP. It functions in the pathway amino-acid biosynthesis; L-arginine biosynthesis; N(2)-acetyl-L-ornithine from L-glutamate: step 2/4. Catalyzes the ATP-dependent phosphorylation of N-acetyl-L-glutamate. This Prochlorococcus marinus (strain MIT 9313) protein is Acetylglutamate kinase.